A 470-amino-acid polypeptide reads, in one-letter code: Ribulose bisphosphate carboxylase large chain (470 aa).

K5 is modified (N6,N6,N6-trimethyllysine). The substrate site is built by N114 and T164. K166 serves as the catalytic Proton acceptor. K168 is a substrate binding site. Positions 192, 194, and 195 each coordinate Mg(2+). K192 bears the N6-carboxylysine mark. The active-site Proton acceptor is H285. Substrate-binding residues include R286, H318, and S370.

The protein belongs to the RuBisCO large chain family. Type I subfamily. In terms of assembly, heterohexadecamer of 8 large chains and 8 small chains; disulfide-linked. The disulfide link is formed within the large subunit homodimers. Mg(2+) is required as a cofactor. The disulfide bond which can form in the large chain dimeric partners within the hexadecamer appears to be associated with oxidative stress and protein turnover.

The protein localises to the plastid. It localises to the chloroplast. It catalyses the reaction 2 (2R)-3-phosphoglycerate + 2 H(+) = D-ribulose 1,5-bisphosphate + CO2 + H2O. It carries out the reaction D-ribulose 1,5-bisphosphate + O2 = 2-phosphoglycolate + (2R)-3-phosphoglycerate + 2 H(+). Its function is as follows. RuBisCO catalyzes two reactions: the carboxylation of D-ribulose 1,5-bisphosphate, the primary event in carbon dioxide fixation, as well as the oxidative fragmentation of the pentose substrate in the photorespiration process. Both reactions occur simultaneously and in competition at the same active site. The protein is Ribulose bisphosphate carboxylase large chain of Bertiera breviflora.